The chain runs to 303 residues: Quinolinate synthase (303 aa).

His-25 and Ser-42 together coordinate iminosuccinate. A [4Fe-4S] cluster-binding site is contributed by Cys-87. Residues 113–115 (YVN) and Ser-130 contribute to the iminosuccinate site. Cys-174 serves as a coordination point for [4Fe-4S] cluster. Iminosuccinate is bound by residues 200–202 (HPE) and Thr-217. Cys-260 contributes to the [4Fe-4S] cluster binding site.

The protein belongs to the quinolinate synthase family. Type 2 subfamily. As to quaternary structure, homodimer. [4Fe-4S] cluster serves as cofactor.

It localises to the cytoplasm. The catalysed reaction is iminosuccinate + dihydroxyacetone phosphate = quinolinate + phosphate + 2 H2O + H(+). It participates in cofactor biosynthesis; NAD(+) biosynthesis; quinolinate from iminoaspartate: step 1/1. Functionally, catalyzes the condensation of iminoaspartate with dihydroxyacetone phosphate to form quinolinate. This Pyrococcus furiosus (strain ATCC 43587 / DSM 3638 / JCM 8422 / Vc1) protein is Quinolinate synthase.